A 122-amino-acid chain; its full sequence is Large ribosomal subunit protein uL14 (122 aa).

Belongs to the universal ribosomal protein uL14 family. Part of the 50S ribosomal subunit. Forms a cluster with proteins L3 and L19. In the 70S ribosome, L14 and L19 interact and together make contacts with the 16S rRNA in bridges B5 and B8.

Functionally, binds to 23S rRNA. Forms part of two intersubunit bridges in the 70S ribosome. In Rhizobium etli (strain CIAT 652), this protein is Large ribosomal subunit protein uL14.